The chain runs to 126 residues: MAGSALEALLVGIGAIPGAWLRLKAVNHFEPMVPKKHWGTFAVNVIACFGLGLVLALYQSCSAKTGLALLIGVGFFGSLSTFSTFAVELLNELRAGRPFVSLVLALASIAAGLCAAGVGYGLGAYG.

Helical transmembrane passes span 1-21 (MAGSALEALLVGIGAIPGAWL), 38-58 (WGTFAVNVIACFGLGLVLALY), 67-87 (LALLIGVGFFGSLSTFSTFAV), and 99-119 (FVSLVLALASIAAGLCAAGVG). The Na(+) site is built by Gly-77 and Ser-80.

Belongs to the fluoride channel Fluc/FEX (TC 1.A.43) family.

The protein resides in the cell inner membrane. It catalyses the reaction fluoride(in) = fluoride(out). Its activity is regulated as follows. Na(+) is not transported, but it plays an essential structural role and its presence is essential for fluoride channel function. Fluoride-specific ion channel. Important for reducing fluoride concentration in the cell, thus reducing its toxicity. In Synechococcus sp. (strain CC9902), this protein is Fluoride-specific ion channel FluC 1.